A 297-amino-acid polypeptide reads, in one-letter code: Ribosomal RNA small subunit methyltransferase A (297 aa).

S-adenosyl-L-methionine is bound by residues Asn31, Leu33, Gly58, Glu79, Asp104, and Asn129.

It belongs to the class I-like SAM-binding methyltransferase superfamily. rRNA adenine N(6)-methyltransferase family. RsmA subfamily.

It is found in the cytoplasm. The enzyme catalyses adenosine(1518)/adenosine(1519) in 16S rRNA + 4 S-adenosyl-L-methionine = N(6)-dimethyladenosine(1518)/N(6)-dimethyladenosine(1519) in 16S rRNA + 4 S-adenosyl-L-homocysteine + 4 H(+). Its function is as follows. Specifically dimethylates two adjacent adenosines (A1518 and A1519) in the loop of a conserved hairpin near the 3'-end of 16S rRNA in the 30S particle. May play a critical role in biogenesis of 30S subunits. The sequence is that of Ribosomal RNA small subunit methyltransferase A from Pediococcus pentosaceus (strain ATCC 25745 / CCUG 21536 / LMG 10740 / 183-1w).